A 391-amino-acid chain; its full sequence is Argininosuccinate synthase (391 aa).

6–14 (AYSGGLDTT) provides a ligand contact to ATP. Tyr84 contributes to the L-citrulline binding site. Residue Gly114 participates in ATP binding. Positions 116, 120, and 121 each coordinate L-aspartate. Asn120 is a binding site for L-citrulline. Residues Arg124, Ser171, Ser180, Glu253, and Tyr265 each coordinate L-citrulline.

This sequence belongs to the argininosuccinate synthase family. Type 1 subfamily. Homotetramer.

It localises to the cytoplasm. It carries out the reaction L-citrulline + L-aspartate + ATP = 2-(N(omega)-L-arginino)succinate + AMP + diphosphate + H(+). It participates in amino-acid biosynthesis; L-arginine biosynthesis; L-arginine from L-ornithine and carbamoyl phosphate: step 2/3. This Metallosphaera sedula (strain ATCC 51363 / DSM 5348 / JCM 9185 / NBRC 15509 / TH2) protein is Argininosuccinate synthase.